A 323-amino-acid polypeptide reads, in one-letter code: HPr kinase/phosphorylase (323 aa).

Catalysis depends on residues His-146 and Lys-167. 161 to 168 (GESGLGKS) is a binding site for ATP. Ser-168 contacts Mg(2+). Asp-185 serves as the catalytic Proton acceptor; for phosphorylation activity. Proton donor; for dephosphorylation activity. Positions 209–218 (LEVRGLGLLD) are important for the catalytic mechanism of both phosphorylation and dephosphorylation. Glu-210 serves as a coordination point for Mg(2+). Arg-250 is an active-site residue. Residues 271-276 (QVAAGR) form an important for the catalytic mechanism of dephosphorylation region.

The protein belongs to the HPrK/P family. As to quaternary structure, homohexamer. The cofactor is Mg(2+).

The catalysed reaction is [HPr protein]-L-serine + ATP = [HPr protein]-O-phospho-L-serine + ADP + H(+). It catalyses the reaction [HPr protein]-O-phospho-L-serine + phosphate + H(+) = [HPr protein]-L-serine + diphosphate. Catalyzes the ATP- as well as the pyrophosphate-dependent phosphorylation of a specific serine residue in HPr, a phosphocarrier protein of the phosphoenolpyruvate-dependent sugar phosphotransferase system (PTS). HprK/P also catalyzes the pyrophosphate-producing, inorganic phosphate-dependent dephosphorylation (phosphorolysis) of seryl-phosphorylated HPr (P-Ser-HPr). In Cupriavidus metallidurans (strain ATCC 43123 / DSM 2839 / NBRC 102507 / CH34) (Ralstonia metallidurans), this protein is HPr kinase/phosphorylase.